Here is a 259-residue protein sequence, read N- to C-terminus: Putative cysteine-rich repeat secretory protein 25 (259 aa).

The signal sequence occupies residues 1 to 31 (MSSSFLSRPLVSVYVFAMVTMQLLFMQSVLS). 2 consecutive Gnk2-homologous domains span residues 37-138 (AYLN…SIYT) and 144-256 (YRHI…LYPF).

This sequence belongs to the cysteine-rich repeat secretory protein family.

Its subcellular location is the secreted. In Arabidopsis thaliana (Mouse-ear cress), this protein is Putative cysteine-rich repeat secretory protein 25 (CRRSP25).